Consider the following 888-residue polypeptide: Pyruvate dehydrogenase E1 component (888 aa).

As to quaternary structure, homodimer. Part of the PDH complex, consisting of multiple copies of pyruvate dehydrogenase (E1), dihydrolipoamide acetyltransferase (E2) and lipoamide dehydrogenase (E3). The cofactor is thiamine diphosphate.

It catalyses the reaction N(6)-[(R)-lipoyl]-L-lysyl-[protein] + pyruvate + H(+) = N(6)-[(R)-S(8)-acetyldihydrolipoyl]-L-lysyl-[protein] + CO2. In terms of biological role, component of the pyruvate dehydrogenase (PDH) complex, that catalyzes the overall conversion of pyruvate to acetyl-CoA and CO(2). This chain is Pyruvate dehydrogenase E1 component (aceE), found in Buchnera aphidicola subsp. Schizaphis graminum (strain Sg).